The chain runs to 116 residues: Putative superoxide reductase (116 aa).

His-20, His-46, His-52, Cys-101, and His-104 together coordinate Fe cation.

This sequence belongs to the desulfoferrodoxin family. Fe cation is required as a cofactor.

The catalysed reaction is reduced [rubredoxin] + superoxide + 2 H(+) = oxidized [rubredoxin] + H2O2. Functionally, uses electrons from reduced NADP, by way of rubredoxin and an oxidoreductase, to catalyze the reduction of superoxide to hydrogen peroxide. In Methanocaldococcus jannaschii (strain ATCC 43067 / DSM 2661 / JAL-1 / JCM 10045 / NBRC 100440) (Methanococcus jannaschii), this protein is Putative superoxide reductase.